The primary structure comprises 482 residues: tRNA sulfurtransferase (482 aa).

In terms of domain architecture, THUMP spans 61 to 165 (SAIRDALTRI…QDRLLLIKGR (105 aa)). ATP is bound by residues 183–184 (LI), lysine 265, glycine 287, and glutamine 296. Cysteine 344 and cysteine 456 form a disulfide bridge. Positions 404 to 482 (FAPTDVLLDI…GFSNVKVYRP (79 aa)) constitute a Rhodanese domain. Catalysis depends on cysteine 456, which acts as the Cysteine persulfide intermediate.

Belongs to the ThiI family.

It localises to the cytoplasm. The catalysed reaction is [ThiI sulfur-carrier protein]-S-sulfanyl-L-cysteine + a uridine in tRNA + 2 reduced [2Fe-2S]-[ferredoxin] + ATP + H(+) = [ThiI sulfur-carrier protein]-L-cysteine + a 4-thiouridine in tRNA + 2 oxidized [2Fe-2S]-[ferredoxin] + AMP + diphosphate. The enzyme catalyses [ThiS sulfur-carrier protein]-C-terminal Gly-Gly-AMP + S-sulfanyl-L-cysteinyl-[cysteine desulfurase] + AH2 = [ThiS sulfur-carrier protein]-C-terminal-Gly-aminoethanethioate + L-cysteinyl-[cysteine desulfurase] + A + AMP + 2 H(+). It functions in the pathway cofactor biosynthesis; thiamine diphosphate biosynthesis. Functionally, catalyzes the ATP-dependent transfer of a sulfur to tRNA to produce 4-thiouridine in position 8 of tRNAs, which functions as a near-UV photosensor. Also catalyzes the transfer of sulfur to the sulfur carrier protein ThiS, forming ThiS-thiocarboxylate. This is a step in the synthesis of thiazole, in the thiamine biosynthesis pathway. The sulfur is donated as persulfide by IscS. This is tRNA sulfurtransferase from Pectobacterium carotovorum subsp. carotovorum (strain PC1).